The sequence spans 293 residues: Acidic endochitinase SE2 (293 aa).

The signal sequence occupies residues 1 to 25 (MAAKIVSVLFLISLLIFASFESSHG). Residues 26–293 (SQIVIYWGQN…GYSSAIKSSV (268 aa)) form the GH18 domain. 2 disulfide bridges follow: Cys45–Cys91 and Cys75–Cys81. Glu151 functions as the Proton donor in the catalytic mechanism. Cys183 and Cys212 are oxidised to a cystine.

This sequence belongs to the glycosyl hydrolase 18 family. Chitinase class II subfamily. As to expression, accumulates in leaves during infection.

It is found in the secreted. Its subcellular location is the extracellular space. It carries out the reaction Random endo-hydrolysis of N-acetyl-beta-D-glucosaminide (1-&gt;4)-beta-linkages in chitin and chitodextrins.. In terms of biological role, this protein functions as a defense against chitin containing fungal pathogens. This endochitinase also exhibits exochitinase activity, i.e. it is capable of hydrolyzing chito-oligosaccharides, including chitobiose. This chain is Acidic endochitinase SE2 (SE2), found in Beta vulgaris (Sugar beet).